Reading from the N-terminus, the 294-residue chain is 4-hydroxy-tetrahydrodipicolinate synthase (294 aa).

Residue Thr-45 participates in pyruvate binding. Catalysis depends on Tyr-133, which acts as the Proton donor/acceptor. The active-site Schiff-base intermediate with substrate is Lys-162. Ile-204 serves as a coordination point for pyruvate.

It belongs to the DapA family. In terms of assembly, homotetramer; dimer of dimers.

It localises to the cytoplasm. The enzyme catalyses L-aspartate 4-semialdehyde + pyruvate = (2S,4S)-4-hydroxy-2,3,4,5-tetrahydrodipicolinate + H2O + H(+). Its pathway is amino-acid biosynthesis; L-lysine biosynthesis via DAP pathway; (S)-tetrahydrodipicolinate from L-aspartate: step 3/4. Functionally, catalyzes the condensation of (S)-aspartate-beta-semialdehyde [(S)-ASA] and pyruvate to 4-hydroxy-tetrahydrodipicolinate (HTPA). The chain is 4-hydroxy-tetrahydrodipicolinate synthase from Bartonella tribocorum (strain CIP 105476 / IBS 506).